Consider the following 396-residue polypeptide: L-lactate dehydrogenase (396 aa).

Residues 1-380 (MIISAASDYR…TQDSLVQGLG (380 aa)) form the FMN hydroxy acid dehydrogenase domain. Residue Tyr-24 participates in substrate binding. FMN-binding residues include Ser-106 and Gln-127. Substrate is bound at residue Tyr-129. FMN is bound at residue Thr-155. Arg-164 is a substrate binding site. Lys-251 is a binding site for FMN. Residue His-275 is the Proton acceptor of the active site. Arg-278 serves as a coordination point for substrate. An FMN-binding site is contributed by 306 to 330 (DSGIRNGLDVVRMIALGADTILLGR).

It belongs to the FMN-dependent alpha-hydroxy acid dehydrogenase family. Requires FMN as cofactor.

It is found in the cell inner membrane. The catalysed reaction is (S)-lactate + A = pyruvate + AH2. Functionally, catalyzes the conversion of L-lactate to pyruvate. Is coupled to the respiratory chain. The sequence is that of L-lactate dehydrogenase from Escherichia coli O81 (strain ED1a).